Here is a 92-residue protein sequence, read N- to C-terminus: Costars family protein ST45-2 (92 aa).

Met1 bears the N-acetylmethionine mark.

The protein belongs to the costars family.

This chain is Costars family protein ST45-2, found in Eutrema halophilum (Salt cress).